A 447-amino-acid polypeptide reads, in one-letter code: N-succinylarginine dihydrolase (447 aa).

Residues 19-28 (AGLSFGNEAS), N110, and 137-138 (HR) contribute to the substrate site. E174 is an active-site residue. R212 serves as a coordination point for substrate. H248 is an active-site residue. Residues D250 and N359 each contribute to the substrate site. Residue C365 is the Nucleophile of the active site.

Belongs to the succinylarginine dihydrolase family. As to quaternary structure, homodimer.

The catalysed reaction is N(2)-succinyl-L-arginine + 2 H2O + 2 H(+) = N(2)-succinyl-L-ornithine + 2 NH4(+) + CO2. It participates in amino-acid degradation; L-arginine degradation via AST pathway; L-glutamate and succinate from L-arginine: step 2/5. In terms of biological role, catalyzes the hydrolysis of N(2)-succinylarginine into N(2)-succinylornithine, ammonia and CO(2). This Shigella boydii serotype 4 (strain Sb227) protein is N-succinylarginine dihydrolase.